The sequence spans 238 residues: Dolichyldiphosphatase 1 (238 aa).

4 consecutive transmembrane segments (helical) span residues 33–53 (LAYL…LIIF), 100–120 (PSSH…FLYL), 130–150 (FLDL…AFLV), and 162–182 (WSQV…WFII).

Belongs to the dolichyldiphosphatase family. Widely expressed with highest levels in brain, kidney, lung and intestine.

The protein resides in the endoplasmic reticulum membrane. The enzyme catalyses a di-trans,poly-cis-dolichyl diphosphate + H2O = a di-trans,poly-cis-dolichyl phosphate + phosphate + H(+). It functions in the pathway protein modification; protein glycosylation. Its function is as follows. Required for efficient N-glycosylation. Necessary for maintaining optimal levels of dolichol-linked oligosaccharides. Hydrolyzes dolichyl pyrophosphate at a very high rate and dolichyl monophosphate at a much lower rate. Does not act on phosphatidate. This Mus musculus (Mouse) protein is Dolichyldiphosphatase 1 (Dolpp1).